A 549-amino-acid polypeptide reads, in one-letter code: Glucose-6-phosphate isomerase (549 aa).

E355 acts as the Proton donor in catalysis. Active-site residues include H387 and K515.

The protein belongs to the GPI family.

Its subcellular location is the cytoplasm. It carries out the reaction alpha-D-glucose 6-phosphate = beta-D-fructose 6-phosphate. Its pathway is carbohydrate biosynthesis; gluconeogenesis. It functions in the pathway carbohydrate degradation; glycolysis; D-glyceraldehyde 3-phosphate and glycerone phosphate from D-glucose: step 2/4. In terms of biological role, catalyzes the reversible isomerization of glucose-6-phosphate to fructose-6-phosphate. This Haemophilus influenzae (strain 86-028NP) protein is Glucose-6-phosphate isomerase.